We begin with the raw amino-acid sequence, 608 residues long: N(6)-adenosine-methyltransferase MT-A70-like protein (608 aa).

Residues 250-265 show a composition bias toward basic and acidic residues; sequence KKKQERRDEKELRPDV. Residues 250 to 272 are disordered; the sequence is KKKQERRDEKELRPDVDAGENVT. Residues 395-396 and aspartate 413 contribute to the S-adenosyl-L-methionine site; that span reads DL. The segment at 414–428 is gate loop 1; it reads PPWDIHMELPYGTMS. The tract at residues 480 to 497 is interphase loop; it reads QLQRIIRTGRTGHWLNHG. The positively charged region required for RNA-binding stretch occupies residues 483–496; that stretch reads RIIRTGRTGHWLNH. The gate loop 2 stretch occupies residues 525–533; the sequence is VRATSHKPD. Residues lysine 531, 554–557, and 567–568 contribute to the S-adenosyl-L-methionine site; these read RPHN and NQ.

Belongs to the MT-A70-like family. In terms of assembly, component of the WMM complex, a N6-methyltransferase complex composed of a catalytic subcomplex, named MAC, and of an associated subcomplex, named MACOM. The MAC subcomplex is composed of Ime4/Mettl3 and Mettl14. The MACOM subcomplex is composed of fl(2)d, Flacc/Xio, Hakai, vir, and, in some cases of nito. As to expression, expressed in testes. In the ovaries, detected in germaria, prefollicle, follicle and polar cells (at protein levels). Detected in the ooplasm and in the cells of the 16-cell cyst of early stages (at protein levels).

Its subcellular location is the nucleus. The enzyme catalyses an adenosine in mRNA + S-adenosyl-L-methionine = an N(6)-methyladenosine in mRNA + S-adenosyl-L-homocysteine + H(+). In terms of biological role, catalytic component of the WMM complex, a complex that mediates N6-methyladenosine (m6A) methylation of mRNAs, a modification that plays a role in the efficiency of mRNA splicing and is required for sex determination. In the heterodimer formed with Mettl14, constitutes the catalytic core. Required for sex determination and dosage compensation via Sxl alternative splicing: m6A methylation acts as a key regulator of Sxl pre-mRNA and promotes female-specific alternative splicing of Sxl, which determines female physiognomy. M6A methylation is also required for neuronal functions. During oogenesis, required for egg chamber development probably as part of the N/Notch signaling. The polypeptide is N(6)-adenosine-methyltransferase MT-A70-like protein (Drosophila melanogaster (Fruit fly)).